The primary structure comprises 85 residues: uncharacterized protein (85 aa).

The protein belongs to the ycf76 family.

It localises to the plastid. It is found in the chloroplast. This is an uncharacterized protein from Zea mays (Maize).